The chain runs to 134 residues: UPF0412 protein YaaI (134 aa).

The first 23 residues, 1–23 (MKSVFTISASLAISLMLCCTAQA), serve as a signal peptide directing secretion.

The protein belongs to the UPF0412 family.

This is UPF0412 protein YaaI from Escherichia coli (strain ATCC 8739 / DSM 1576 / NBRC 3972 / NCIMB 8545 / WDCM 00012 / Crooks).